A 572-amino-acid chain; its full sequence is Sulfate adenylyltransferase (572 aa).

Residues 1–169 (MANAPHGGVL…IEAVNKLNHY (169 aa)) form an N-terminal region. The segment at 170-393 (DYVALRYTPA…LRESNPPRAT (224 aa)) is catalytic. Position 197 (Q197) interacts with sulfate. ATP contacts are provided by residues 197 to 200 (QTRN) and 291 to 294 (GRDH). Residues T198, R199, and N200 contribute to the active site. R199 contacts sulfate. Sulfate is bound at residue A295. V333 is an ATP binding site. The allosteric regulation domain; adenylyl-sulfate kinase-like stretch occupies residues 394 to 572 (QGFTIFLTGY…LESQGFLERQ (179 aa)). Residues 433–436 (DTVR), R450, 476–477 (IA), and R514 contribute to the 3'-phosphoadenylyl sulfate site.

The protein in the N-terminal section; belongs to the sulfate adenylyltransferase family. It in the C-terminal section; belongs to the APS kinase family. As to quaternary structure, homohexamer. Dimer of trimers.

The protein localises to the cytoplasm. It carries out the reaction sulfate + ATP + H(+) = adenosine 5'-phosphosulfate + diphosphate. It functions in the pathway sulfur metabolism; hydrogen sulfide biosynthesis; sulfite from sulfate: step 1/3. Its activity is regulated as follows. Allosterically inhibited by 3'-phosphoadenosine 5'-phosphosulfate (PAPS). In terms of biological role, catalyzes the first intracellular reaction of sulfate assimilation, forming adenosine-5'-phosphosulfate (APS) from inorganic sulfate and ATP. Plays an important role in sulfate activation as a component of the biosynthesis pathway of sulfur-containing amino acids. The protein is Sulfate adenylyltransferase of Penicillium chrysogenum (Penicillium notatum).